The primary structure comprises 354 residues: Biotin synthase (354 aa).

Positions 41-265 (NEVQISRLLS…LMPHSRVRLS (225 aa)) constitute a Radical SAM core domain. [4Fe-4S] cluster contacts are provided by C56, C60, and C63. The [2Fe-2S] cluster site is built by C100, C131, C191, and R263.

Belongs to the radical SAM superfamily. Biotin synthase family. As to quaternary structure, homodimer. It depends on [4Fe-4S] cluster as a cofactor. The cofactor is [2Fe-2S] cluster.

The catalysed reaction is (4R,5S)-dethiobiotin + (sulfur carrier)-SH + 2 reduced [2Fe-2S]-[ferredoxin] + 2 S-adenosyl-L-methionine = (sulfur carrier)-H + biotin + 2 5'-deoxyadenosine + 2 L-methionine + 2 oxidized [2Fe-2S]-[ferredoxin]. Its pathway is cofactor biosynthesis; biotin biosynthesis; biotin from 7,8-diaminononanoate: step 2/2. In terms of biological role, catalyzes the conversion of dethiobiotin (DTB) to biotin by the insertion of a sulfur atom into dethiobiotin via a radical-based mechanism. This Shewanella woodyi (strain ATCC 51908 / MS32) protein is Biotin synthase.